The primary structure comprises 374 residues: Peptide chain release factor 2 (374 aa).

N5-methylglutamine is present on Q256.

The protein belongs to the prokaryotic/mitochondrial release factor family. In terms of processing, methylated by PrmC. Methylation increases the termination efficiency of RF2.

The protein resides in the cytoplasm. Peptide chain release factor 2 directs the termination of translation in response to the peptide chain termination codons UGA and UAA. The polypeptide is Peptide chain release factor 2 (Mycobacterium leprae (strain Br4923)).